We begin with the raw amino-acid sequence, 412 residues long: Citrate synthase (412 aa).

Active-site residues include His-305 and Asp-364.

Belongs to the citrate synthase family.

The enzyme catalyses oxaloacetate + acetyl-CoA + H2O = citrate + CoA + H(+). Its pathway is carbohydrate metabolism; tricarboxylic acid cycle; isocitrate from oxaloacetate: step 1/2. This is Citrate synthase (gltA) from Rickettsia bellii.